Here is a 272-residue protein sequence, read N- to C-terminus: uncharacterized protein (272 aa).

The next 6 helical transmembrane spans lie at 20-37 (VYLSVFIVLALYCVNLLI), 57-77 (HPLTYTIIPTYLVVLTAHFSL), 97-119 (LNVSCIAIVTTGYSVLIAFIMLM), 155-177 (SIATLLLLWLLLFLLGLLFYVIF), 184-203 (LVSLLFVFLLNIMNAAVTLG), and 234-256 (PYSIFVYWIMLIAVIYLIGWLVI).

The protein resides in the cell membrane. This is an uncharacterized protein from Halalkalibacterium halodurans (strain ATCC BAA-125 / DSM 18197 / FERM 7344 / JCM 9153 / C-125) (Bacillus halodurans).